Reading from the N-terminus, the 535-residue chain is Alpha-1,3-mannosyl-glycoprotein 4-beta-N-acetylglucosaminyltransferase A (535 aa).

Residues 1-6 (MRLRNG) are Cytoplasmic-facing. The helical; Signal-anchor for type II membrane protein transmembrane segment at 7-27 (TVATVLVFITTFLSLSWYTAW) threads the bilayer. Residues 28–54 (QNGKEKLIAYQREFHALKERLRIAEHR) are a coiled coil. The Lumenal portion of the chain corresponds to 28–535 (QNGKEKLIAY…NEIHIKKMTN (508 aa)). N-linked (GlcNAc...) asparagine glycans are attached at residues N77, N85, and N458.

Belongs to the glycosyltransferase 54 family. Requires a divalent metal cation as cofactor. N-glycosylated.

The protein localises to the golgi apparatus membrane. Its subcellular location is the secreted. It catalyses the reaction N(4)-{beta-D-GlcNAc-(1-&gt;2)-alpha-D-Man-(1-&gt;3)-[beta-D-GlcNAc-(1-&gt;2)-alpha-D-Man-(1-&gt;6)]-beta-D-Man-(1-&gt;4)-beta-D-GlcNAc-(1-&gt;4)-beta-D-GlcNAc}-L-asparaginyl-[protein] + UDP-N-acetyl-alpha-D-glucosamine = N(4)-{beta-D-GlcNAc-(1-&gt;2)-[beta-D-GlcNAc-(1-&gt;4)]-alpha-D-Man-(1-&gt;3)-[beta-D-GlcNAc-(1-&gt;2)-alpha-D-Man-(1-&gt;6)]-beta-D-Man-(1-&gt;4)-beta-D-GlcNAc-(1-&gt;4)-beta-D-GlcNAc}-L-asparaginyl-[protein] + UDP + H(+). The enzyme catalyses an N(4)-{beta-D-GlcNAc-(1-&gt;2)-alpha-D-Man-(1-&gt;3)-[alpha-D-Man-(1-&gt;6)]-beta-D-Man-(1-&gt;4)-beta-D-GlcNAc-(1-&gt;4)-beta-D-GlcNAc}-L-asparaginyl-[protein] + UDP-N-acetyl-alpha-D-glucosamine = an N(4)-{beta-D-GlcNAc-(1-&gt;2)-[beta-D-GlcNAc-(1-&gt;4)]-alpha-D-Man-(1-&gt;3)-[alpha-D-Man-(1-&gt;6)]-beta-D-Man-(1-&gt;4)-beta-D-GlcNAc-(1-&gt;4)-beta-D-GlcNAc}-L-asparaginyl-[protein] + UDP + H(+). The catalysed reaction is an N(4)-{beta-D-GlcNAc-(1-&gt;2)-alpha-D-Man-(1-&gt;3)-[beta-D-GlcNAc-(1-&gt;2)-[beta-D-GlcNAc-(1-&gt;6)]-alpha-D-Man-(1-&gt;6)]-beta-D-Man-(1-&gt;4)-beta-D-GlcNAc-(1-&gt;4)-beta-D-GlcNAc}-L-asparaginyl-[protein] + UDP-N-acetyl-alpha-D-glucosamine = an N(4)-{beta-D-GlcNAc-(1-&gt;2)-[beta-D-GlcNAc-(1-&gt;4)]-alpha-D-Man-(1-&gt;3)-[beta-D-GlcNAc-(1-&gt;2)-[beta-D-GlcNAc-(1-&gt;6)]-alpha-D-Man-(1-&gt;6)]-beta-D-Man-(1-&gt;4)-beta-D-GlcNAc-(1-&gt;4)-beta-D-GlcNAc}-L-asparaginyl-[protein] + UDP + H(+). It carries out the reaction an N(4)-{beta-D-GlcNAc-(1-&gt;2)-alpha-D-Man-(1-&gt;3)-[beta-D-GlcNAc-(1-&gt;2)-alpha-D-Man-(1-&gt;6)]-beta-D-Man-(1-&gt;4)-beta-D-GlcNAc-(1-&gt;4)-[alpha-L-Fuc-(1-&gt;6)]-beta-D-GlcNAc}-L-asparaginyl-[protein] + UDP-N-acetyl-alpha-D-glucosamine = N(4)-{beta-D-GlcNAc-(1-&gt;2)-[beta-D-GlcNAc-(1-&gt;4)]-alpha-D-Man-(1-&gt;3)-[beta-D-GlcNAc-(1-&gt;2)-alpha-D-Man-(1-&gt;6)]-beta-D-Man-(1-&gt;4)-beta-D-GlcNAc-(1-&gt;4)-[alpha-L-Fuc-(1-&gt;6)]-beta-D-GlcNAc}-asparaginyl-[protein] + UDP + H(+). It catalyses the reaction an N(4)-{beta-D-GlcNAc-(1-&gt;2)-alpha-D-Man-(1-&gt;3)-[beta-D-Gal-(1-&gt;4)-beta-D-GlcNAc-(1-&gt;2)-alpha-D-Man-(1-&gt;6)]-beta-D-Man-(1-&gt;4)-beta-D-GlcNAc-(1-&gt;4)-beta-D-GlcNAc}-L-asparaginyl-[protein] + UDP-N-acetyl-alpha-D-glucosamine = an N(4)-{beta-D-GlcNAc-(1-&gt;2)-[beta-D-GlcNAc-(1-&gt;4)]-alpha-D-Man-(1-&gt;3)-[beta-D-Gal-(1-&gt;4)-beta-D-GlcNAc-(1-&gt;2)-alpha-D-Man-(1-&gt;6)]-beta-D-Man-(1-&gt;4)-beta-D-GlcNAc-(1-&gt;4)-beta-D-GlcNAc}-L-asparaginyl-[protein] + UDP + H(+). The enzyme catalyses N(4)-{beta-D-GlcNAc-(1-&gt;2)-alpha-D-Man-(1-&gt;3)-[alpha-D-Man-(1-&gt;3)-{alpha-D-Man-(1-&gt;6)}-alpha-D-Man-(1-&gt;6)]-beta-D-Man-(1-&gt;4)-beta-D-GlcNAc-(1-&gt;4)-beta-D-GlcNAc}-asparaginyl-[protein] + UDP-N-acetyl-alpha-D-glucosamine = N(4)-{beta-D-GlcNAc-(1-&gt;2)-[beta-D-GlcNAc-(1-&gt;4)]-alpha-D-Man-(1-&gt;3)-[alpha-D-Man-(1-&gt;3)-{alpha-D-Man-(1-&gt;6)}-alpha-D-Man-(1-&gt;6)]-beta-D-Man-(1-&gt;4)-beta-D-GlcNAc-(1-&gt;4)-beta-D-GlcNAc}-asparaginyl-[protein] + UDP + H(+). The catalysed reaction is N(4)-{beta-D-GlcNAc-(1-&gt;2)-alpha-D-Man-(1-&gt;3)-beta-D-Man-(1-&gt;4)-beta-D-GlcNAc-(1-&gt;4)-beta-D-GlcNAc}-asparaginyl-[protein] + UDP-N-acetyl-alpha-D-glucosamine = N(4)-{beta-D-GlcNAc-(1-&gt;2)-[beta-D-GlcNAc-(1-&gt;4)]-alpha-D-Man-(1-&gt;3)-beta-D-Man-(1-&gt;4)-beta-D-GlcNAc-(1-&gt;4)-beta-D-GlcNAc}-asparaginyl-[protein] + UDP + H(+). The protein operates within protein modification; protein glycosylation. With respect to regulation, inhibited by UDP. Functionally, glycosyltransferase that catalyze the transfer of GlcNAc from UDP-GlcNAc to the GlcNAcbeta1-2Manalpha1-3 arm of the core structure of N-linked glycans through a beta1-4 linkage and participates in the production of tri- and tetra-antennary N-linked sugar chains. Involved in glucose transport by mediating SLC2A2/GLUT2 glycosylation, thereby controlling cell-surface expression of SLC2A2 in pancreatic beta cells. The chain is Alpha-1,3-mannosyl-glycoprotein 4-beta-N-acetylglucosaminyltransferase A from Gallus gallus (Chicken).